A 263-amino-acid polypeptide reads, in one-letter code: Type III pantothenate kinase (263 aa).

An ATP-binding site is contributed by 6 to 13 (DVGNTNIK). 108 to 111 (GSDR) is a binding site for substrate. D110 acts as the Proton acceptor in catalysis. D131 contacts K(+). Residue T134 participates in ATP binding. T187 serves as a coordination point for substrate.

This sequence belongs to the type III pantothenate kinase family. Homodimer. Requires NH4(+) as cofactor. K(+) serves as cofactor.

The protein resides in the cytoplasm. It catalyses the reaction (R)-pantothenate + ATP = (R)-4'-phosphopantothenate + ADP + H(+). Its pathway is cofactor biosynthesis; coenzyme A biosynthesis; CoA from (R)-pantothenate: step 1/5. Its function is as follows. Catalyzes the phosphorylation of pantothenate (Pan), the first step in CoA biosynthesis. This chain is Type III pantothenate kinase, found in Anaplasma phagocytophilum (strain HZ).